The primary structure comprises 293 residues: 4-hydroxy-tetrahydrodipicolinate synthase (293 aa).

Thr-45 provides a ligand contact to pyruvate. The active-site Proton donor/acceptor is the Tyr-133. The active-site Schiff-base intermediate with substrate is Lys-161. Ile-203 serves as a coordination point for pyruvate.

It belongs to the DapA family. In terms of assembly, homotetramer; dimer of dimers.

The protein localises to the cytoplasm. The enzyme catalyses L-aspartate 4-semialdehyde + pyruvate = (2S,4S)-4-hydroxy-2,3,4,5-tetrahydrodipicolinate + H2O + H(+). It participates in amino-acid biosynthesis; L-lysine biosynthesis via DAP pathway; (S)-tetrahydrodipicolinate from L-aspartate: step 3/4. In terms of biological role, catalyzes the condensation of (S)-aspartate-beta-semialdehyde [(S)-ASA] and pyruvate to 4-hydroxy-tetrahydrodipicolinate (HTPA). In Shewanella denitrificans (strain OS217 / ATCC BAA-1090 / DSM 15013), this protein is 4-hydroxy-tetrahydrodipicolinate synthase.